The primary structure comprises 146 residues: Small ribosomal subunit protein bS6 (146 aa).

The segment at 106-146 (QAAATQRAAERRAQREAERNAAQAQSSASNQARTAATTSGK) is disordered. Over residues 113–124 (AAERRAQREAER) the composition is skewed to basic and acidic residues. Low complexity predominate over residues 125-146 (NAAQAQSSASNQARTAATTSGK).

The protein belongs to the bacterial ribosomal protein bS6 family.

Its function is as follows. Binds together with bS18 to 16S ribosomal RNA. This chain is Small ribosomal subunit protein bS6, found in Oenococcus oeni (strain ATCC BAA-331 / PSU-1).